A 72-amino-acid chain; its full sequence is Putative snRNP Sm-like protein (72 aa).

In terms of domain architecture, Sm spans 4-72 (RPLDILNNAL…RGDNVVYVSP (69 aa)).

Belongs to the snRNP Sm proteins family.

In Methanosarcina acetivorans (strain ATCC 35395 / DSM 2834 / JCM 12185 / C2A), this protein is Putative snRNP Sm-like protein.